The sequence spans 214 residues: Imidazole glycerol phosphate synthase subunit HisH 2 (214 aa).

A Glutamine amidotransferase type-1 domain is found at K2–G210. The Nucleophile role is filled by C82. Active-site residues include H185 and E187.

As to quaternary structure, heterodimer of HisH and HisF.

The protein localises to the cytoplasm. It carries out the reaction 5-[(5-phospho-1-deoxy-D-ribulos-1-ylimino)methylamino]-1-(5-phospho-beta-D-ribosyl)imidazole-4-carboxamide + L-glutamine = D-erythro-1-(imidazol-4-yl)glycerol 3-phosphate + 5-amino-1-(5-phospho-beta-D-ribosyl)imidazole-4-carboxamide + L-glutamate + H(+). The catalysed reaction is L-glutamine + H2O = L-glutamate + NH4(+). It participates in amino-acid biosynthesis; L-histidine biosynthesis; L-histidine from 5-phospho-alpha-D-ribose 1-diphosphate: step 5/9. Its function is as follows. IGPS catalyzes the conversion of PRFAR and glutamine to IGP, AICAR and glutamate. The HisH subunit provides the glutamine amidotransferase activity that produces the ammonia necessary to HisF for the synthesis of IGP and AICAR. In Vibrio vulnificus (strain YJ016), this protein is Imidazole glycerol phosphate synthase subunit HisH 2 (hisH2).